The sequence spans 341 residues: Glycerol-3-phosphate dehydrogenase [NAD(P)+] (341 aa).

Residues Ser-11, Trp-12, Arg-33, and Lys-106 each coordinate NADPH. Positions 106, 137, and 139 each coordinate sn-glycerol 3-phosphate. NADPH is bound at residue Ala-141. The sn-glycerol 3-phosphate site is built by Lys-192, Asp-245, Ser-255, Arg-256, and Asn-257. The Proton acceptor role is filled by Lys-192. Residue Arg-256 participates in NADPH binding. Val-280 and Glu-282 together coordinate NADPH.

Belongs to the NAD-dependent glycerol-3-phosphate dehydrogenase family.

It is found in the cytoplasm. The catalysed reaction is sn-glycerol 3-phosphate + NAD(+) = dihydroxyacetone phosphate + NADH + H(+). The enzyme catalyses sn-glycerol 3-phosphate + NADP(+) = dihydroxyacetone phosphate + NADPH + H(+). It participates in membrane lipid metabolism; glycerophospholipid metabolism. Its function is as follows. Catalyzes the reduction of the glycolytic intermediate dihydroxyacetone phosphate (DHAP) to sn-glycerol 3-phosphate (G3P), the key precursor for phospholipid synthesis. In Bacillus cytotoxicus (strain DSM 22905 / CIP 110041 / 391-98 / NVH 391-98), this protein is Glycerol-3-phosphate dehydrogenase [NAD(P)+].